The chain runs to 155 residues: Putative pre-16S rRNA nuclease (155 aa).

Belongs to the YqgF nuclease family.

The protein resides in the cytoplasm. Its function is as follows. Could be a nuclease involved in processing of the 5'-end of pre-16S rRNA. This chain is Putative pre-16S rRNA nuclease, found in Xanthomonas euvesicatoria pv. vesicatoria (strain 85-10) (Xanthomonas campestris pv. vesicatoria).